The chain runs to 464 residues: ATP synthase subunit beta (464 aa).

148–155 (GGAGVGKT) serves as a coordination point for ATP.

The protein belongs to the ATPase alpha/beta chains family. As to quaternary structure, F-type ATPases have 2 components, CF(1) - the catalytic core - and CF(0) - the membrane proton channel. CF(1) has five subunits: alpha(3), beta(3), gamma(1), delta(1), epsilon(1). CF(0) has three main subunits: a(1), b(2) and c(9-12). The alpha and beta chains form an alternating ring which encloses part of the gamma chain. CF(1) is attached to CF(0) by a central stalk formed by the gamma and epsilon chains, while a peripheral stalk is formed by the delta and b chains.

Its subcellular location is the cell inner membrane. The enzyme catalyses ATP + H2O + 4 H(+)(in) = ADP + phosphate + 5 H(+)(out). In terms of biological role, produces ATP from ADP in the presence of a proton gradient across the membrane. The catalytic sites are hosted primarily by the beta subunits. This is ATP synthase subunit beta from Acinetobacter baumannii (strain AB0057).